The sequence spans 963 residues: Trehalose synthase (963 aa).

Aspartate 60 contributes to the substrate binding site. Position 100 (asparagine 100) interacts with Ca(2+). 2 residues coordinate substrate: histidine 101 and glutamine 165. Position 167 (aspartate 167) interacts with Ca(2+). A substrate-binding site is contributed by arginine 195. Catalysis depends on aspartate 197, which acts as the Nucleophile. Residues tyrosine 201, leucine 202, and glutamate 204 each contribute to the Ca(2+) site. Glutamate 240 (proton donor) is an active-site residue. Substrate contacts are provided by histidine 305 and aspartate 306.

Belongs to the glycosyl hydrolase 13 family. TreS subfamily.

The catalysed reaction is D-maltose = alpha,alpha-trehalose. Functionally, catalyzes the reversible interconversion of maltose and alpha,alpha-trehalose by transglucosylation. This chain is Trehalose synthase (treS), found in Thermus thermophilus.